The chain runs to 379 residues: Galactose-1-phosphate uridylyltransferase (379 aa).

The tract at residues 1 to 21 (MSRSGTDPQQRQQASEADAAA) is disordered. Over residues 9 to 21 (QQRQQASEADAAA) the composition is skewed to low complexity. Residue C75 participates in Zn(2+) binding. UDP-alpha-D-glucose is bound by residues A81, 97–98 (ND), and N173. H184 contributes to the Zn(2+) binding site. H186 acts as the Tele-UMP-histidine intermediate in catalysis. Q188 contacts UDP-alpha-D-glucose. Positions 202, 301, 319, and 321 each coordinate Zn(2+). UDP-alpha-D-glucose-binding positions include 334–337 (KFMV) and 339–340 (YE).

The protein belongs to the galactose-1-phosphate uridylyltransferase type 1 family. In terms of assembly, homodimer. Zn(2+) serves as cofactor.

The catalysed reaction is alpha-D-galactose 1-phosphate + UDP-alpha-D-glucose = alpha-D-glucose 1-phosphate + UDP-alpha-D-galactose. Its pathway is carbohydrate metabolism; galactose metabolism. Its function is as follows. Plays an important role in galactose metabolism. This Homo sapiens (Human) protein is Galactose-1-phosphate uridylyltransferase (GALT).